A 247-amino-acid polypeptide reads, in one-letter code: Caffeoyl-CoA O-methyltransferase (247 aa).

Lysine 21 contributes to the substrate binding site. Residues threonine 63, glutamate 85, 87 to 88 (GV), serine 93, aspartate 111, and alanine 140 each bind S-adenosyl-L-methionine. A substrate-binding site is contributed by aspartate 163. Residue aspartate 163 participates in a divalent metal cation binding. Aspartate 165 contributes to the S-adenosyl-L-methionine binding site. Residues aspartate 189 and asparagine 190 each coordinate a divalent metal cation. Residue asparagine 194 participates in substrate binding.

Belongs to the class I-like SAM-binding methyltransferase superfamily. Cation-dependent O-methyltransferase family. CCoAMT subfamily. In terms of assembly, homodimer. Requires Ca(2+) as cofactor. Mg(2+) serves as cofactor. Zn(2+) is required as a cofactor.

It carries out the reaction (E)-caffeoyl-CoA + S-adenosyl-L-methionine = (E)-feruloyl-CoA + S-adenosyl-L-homocysteine + H(+). It participates in aromatic compound metabolism; phenylpropanoid biosynthesis. In terms of biological role, methylates caffeoyl-CoA to feruloyl-CoA and 5-hydroxyferuloyl-CoA to sinapoyl-CoA. Plays a role in the synthesis of feruloylated polysaccharides. Involved in the reinforcement of the plant cell wall. Also involved in the responding to wounding or pathogen challenge by the increased formation of cell wall-bound ferulic acid polymers. In Medicago sativa (Alfalfa), this protein is Caffeoyl-CoA O-methyltransferase (CCOMT).